A 260-amino-acid chain; its full sequence is UPF0246 protein APP7_0648 (260 aa).

This sequence belongs to the UPF0246 family.

This chain is UPF0246 protein APP7_0648, found in Actinobacillus pleuropneumoniae serotype 7 (strain AP76).